We begin with the raw amino-acid sequence, 178 residues long: Cytochrome b6-f complex iron-sulfur subunit (178 aa).

A helical transmembrane segment spans residues 20–42; the sequence is LLTFGTATGVALGALYPVANYFM. In terms of domain architecture, Rieske spans 65–161; that stretch reads KTGWLATHQA…VDIEDDAVLV (97 aa). C107, H109, C125, and H128 together coordinate [2Fe-2S] cluster. A disulfide bridge links C112 with C127.

Belongs to the Rieske iron-sulfur protein family. The 4 large subunits of the cytochrome b6-f complex are cytochrome b6, subunit IV (17 kDa polypeptide, PetD), cytochrome f and the Rieske protein, while the 4 small subunits are PetG, PetL, PetM and PetN. The complex functions as a dimer. It depends on [2Fe-2S] cluster as a cofactor.

The protein resides in the cellular thylakoid membrane. The catalysed reaction is 2 oxidized [plastocyanin] + a plastoquinol + 2 H(+)(in) = 2 reduced [plastocyanin] + a plastoquinone + 4 H(+)(out). Component of the cytochrome b6-f complex, which mediates electron transfer between photosystem II (PSII) and photosystem I (PSI), cyclic electron flow around PSI, and state transitions. This is Cytochrome b6-f complex iron-sulfur subunit from Prochlorococcus marinus (strain MIT 9301).